A 130-amino-acid chain; its full sequence is Small ribosomal subunit protein uS9 (130 aa).

Belongs to the universal ribosomal protein uS9 family.

This is Small ribosomal subunit protein uS9 from Cupriavidus necator (strain ATCC 17699 / DSM 428 / KCTC 22496 / NCIMB 10442 / H16 / Stanier 337) (Ralstonia eutropha).